The sequence spans 89 residues: Small ribosomal subunit protein uS15 (89 aa).

It belongs to the universal ribosomal protein uS15 family. Part of the 30S ribosomal subunit. Forms a bridge to the 50S subunit in the 70S ribosome, contacting the 23S rRNA.

Its function is as follows. One of the primary rRNA binding proteins, it binds directly to 16S rRNA where it helps nucleate assembly of the platform of the 30S subunit by binding and bridging several RNA helices of the 16S rRNA. Functionally, forms an intersubunit bridge (bridge B4) with the 23S rRNA of the 50S subunit in the ribosome. The chain is Small ribosomal subunit protein uS15 from Ligilactobacillus salivarius (strain UCC118) (Lactobacillus salivarius).